Consider the following 416-residue polypeptide: Multifunctional CCA protein (416 aa).

ATP contacts are provided by Gly8 and Arg11. 2 residues coordinate CTP: Gly8 and Arg11. The Mg(2+) site is built by Asp21 and Asp23. Arg91, Arg137, and Arg140 together coordinate ATP. 3 residues coordinate CTP: Arg91, Arg137, and Arg140. The region spanning 228–329 (TGVHTLMVLA…VKIFDKADFW (102 aa)) is the HD domain.

It belongs to the tRNA nucleotidyltransferase/poly(A) polymerase family. Bacterial CCA-adding enzyme type 1 subfamily. In terms of assembly, monomer. Can also form homodimers and oligomers. It depends on Mg(2+) as a cofactor. Requires Ni(2+) as cofactor.

The catalysed reaction is a tRNA precursor + 2 CTP + ATP = a tRNA with a 3' CCA end + 3 diphosphate. It carries out the reaction a tRNA with a 3' CCA end + 2 CTP + ATP = a tRNA with a 3' CCACCA end + 3 diphosphate. Its function is as follows. Catalyzes the addition and repair of the essential 3'-terminal CCA sequence in tRNAs without using a nucleic acid template. Adds these three nucleotides in the order of C, C, and A to the tRNA nucleotide-73, using CTP and ATP as substrates and producing inorganic pyrophosphate. tRNA 3'-terminal CCA addition is required both for tRNA processing and repair. Also involved in tRNA surveillance by mediating tandem CCA addition to generate a CCACCA at the 3' terminus of unstable tRNAs. While stable tRNAs receive only 3'-terminal CCA, unstable tRNAs are marked with CCACCA and rapidly degraded. The sequence is that of Multifunctional CCA protein from Shewanella baltica (strain OS185).